Here is a 1220-residue protein sequence, read N- to C-terminus: Eukaryotic translation initiation factor 5B (1220 aa).

Disordered regions lie at residues 1–417 and 430–608; these read MGKK…EARA and GVEV…AYDK. Positions 7-16 are enriched in basic and acidic residues; it reads NKSEDSTKDD. The segment covering 20–32 has biased composition (low complexity); it reads DALAAEIEGAGAA. S66 is subject to Phosphoserine. The segment covering 95 to 105 has biased composition (basic residues); the sequence is DKKKKGQKGKK. A phosphoserine mark is found at S107 and S113. Residues 109 to 118 are compositionally biased toward acidic residues; the sequence is DDNDSEELED. Phosphotyrosine is present on Y134. A phosphoserine mark is found at S135 and S137. Over residues 146–158 the composition is skewed to basic residues; sequence LPKKAKGKAQKSN. S164, S171, S182, S183, S186, S190, S214, and S222 each carry phosphoserine. Over residues 170-179 the composition is skewed to basic and acidic residues; sequence NSKKIKERSR. Positions 231–282 are enriched in basic and acidic residues; sequence KKAEKKERERKKRDEEKAKLRKLKEKEELETGKKDQSKQKESQRKFEEETVK. Phosphothreonine is present on T301. 3 stretches are compositionally biased toward basic and acidic residues: residues 323–334, 349–417, and 434–449; these read GEKEEKEKEKKK, AKLK…EARA, and PSKD…YEDK. Position 438 is a phosphoserine (S438). The span at 491–516 shows a compositional bias: acidic residues; sequence EPEEEEDTEDAGLDDWEAMASDEETE. Residue T498 is modified to Phosphothreonine. Basic and acidic residues predominate over residues 517 to 530; it reads KVEGNKVHIEVKEN. The span at 531 to 569 shows a compositional bias: acidic residues; that stretch reads PEEEEEEEEEEEEDEESEEEEEEEGESEGSEGDEEDEKV. Phosphoserine is present on residues S547, S557, S560, S588, S589, S591, and S595. The segment covering 570–588 has biased composition (basic and acidic residues); the sequence is SDEKDSGKTLDKKPSKEMS. Residues 598–608 are compositionally biased toward basic and acidic residues; that stretch reads DRTKEERAYDK. The 218-residue stretch at 629-846 folds into the tr-type G domain; sequence LRAPIICVLG…LLVELTQTML (218 aa). The G1 stretch occupies residues 638 to 645; the sequence is GHVDTGKT. GTP is bound by residues 640–646 and 663–665; these read VDTGKTK and GIT. The G2 stretch occupies residues 663–667; it reads GITQQ. Residues 702-705 are G3; that stretch reads DTPG. H706 is an active-site residue. GTP contacts are provided by residues 756 to 757, 759 to 760, and 825 to 826; these read NK, DR, and AH. Residues 756–759 are G4; sequence NKID. A G5 region spans residues 824–826; that stretch reads SAH. S1168 carries the post-translational modification Phosphoserine.

This sequence belongs to the TRAFAC class translation factor GTPase superfamily. Classic translation factor GTPase family. IF-2 subfamily. Interacts through its C-terminal domain (CTD) with the CTD of eIF1A (EIF1AX) or with the CTD of EIF5 (mutually exclusive) through a common binding site. Interacts with eIF1A (EIF1AX) from the location of the start codon by the 43S complex until the formation of the 80S complex. Interacts with ANXA5 in a calcium and phospholipid-dependent manner. A monovalent cation serves as cofactor. (Microbial infection) Cleaved and inactivated by the protease 3C of poliovirus, Coxsackievirus B3 and Human rhinovirus 14, allowing the virus to shutoff the host cell translation.

The protein resides in the cytoplasm. The catalysed reaction is GTP + H2O = GDP + phosphate + H(+). In terms of biological role, plays a role in translation initiation. Ribosome-dependent GTPase that promotes the joining of the 60S ribosomal subunit to the pre-initiation complex to form the 80S initiation complex with the initiator methionine-tRNA in the P-site base paired to the start codon. Together with eIF1A (EIF1AX), actively orients the initiator methionine-tRNA in a conformation that allows 60S ribosomal subunit joining to form the 80S initiation complex. Is released after formation of the 80S initiation complex. Its GTPase activity is not essential for ribosomal subunits joining, but GTP hydrolysis is needed for eIF1A (EIF1AX) ejection quickly followed by EIF5B release to form elongation-competent ribosomes. In contrast to its procaryotic homolog, does not promote recruitment of Met-rRNA to the small ribosomal subunit. In Homo sapiens (Human), this protein is Eukaryotic translation initiation factor 5B (EIF5B).